Consider the following 100-residue polypeptide: NADH-quinone oxidoreductase subunit K (100 aa).

The next 3 membrane-spanning stretches (helical) occupy residues 4–24 (TTWV…GLLS), 28–48 (LLFI…LFIA), and 60–80 (IMYL…LALV).

This sequence belongs to the complex I subunit 4L family. As to quaternary structure, NDH-1 is composed of 13 different subunits. Subunits NuoA, H, J, K, L, M, N constitute the membrane sector of the complex.

Its subcellular location is the cell inner membrane. The enzyme catalyses a quinone + NADH + 5 H(+)(in) = a quinol + NAD(+) + 4 H(+)(out). Its function is as follows. NDH-1 shuttles electrons from NADH, via FMN and iron-sulfur (Fe-S) centers, to quinones in the respiratory chain. The immediate electron acceptor for the enzyme in this species is believed to be ubiquinone. Couples the redox reaction to proton translocation (for every two electrons transferred, four hydrogen ions are translocated across the cytoplasmic membrane), and thus conserves the redox energy in a proton gradient. This chain is NADH-quinone oxidoreductase subunit K, found in Shewanella woodyi (strain ATCC 51908 / MS32).